The sequence spans 401 residues: UPF0283 membrane protein SO_1811 (401 aa).

Residues 1–22 (MSVELLPHSTEPHANGADKSVS) are disordered. Transmembrane regions (helical) follow at residues 99–119 (LARL…VLGL), 129–149 (LFSF…VGVI), and 239–259 (ESAV…IILW).

Belongs to the UPF0283 family.

The protein resides in the cell inner membrane. This chain is UPF0283 membrane protein SO_1811, found in Shewanella oneidensis (strain ATCC 700550 / JCM 31522 / CIP 106686 / LMG 19005 / NCIMB 14063 / MR-1).